The primary structure comprises 205 residues: Protein GrpE (205 aa).

The span at 1 to 18 (MSEEVKNSVETEENKASK) shows a compositional bias: basic and acidic residues. A disordered region spans residues 1 to 60 (MSEEVKNSVETEENKASKDNATQAPNPTENHNTAQETEKAENSEKTESATQENESLDKLK). The segment covering 19–35 (DNATQAPNPTENHNTAQ) has biased composition (polar residues). Residues 36-47 (ETEKAENSEKTE) show a composition bias toward basic and acidic residues.

It belongs to the GrpE family. In terms of assembly, homodimer.

The protein resides in the cytoplasm. Participates actively in the response to hyperosmotic and heat shock by preventing the aggregation of stress-denatured proteins, in association with DnaK and GrpE. It is the nucleotide exchange factor for DnaK and may function as a thermosensor. Unfolded proteins bind initially to DnaJ; upon interaction with the DnaJ-bound protein, DnaK hydrolyzes its bound ATP, resulting in the formation of a stable complex. GrpE releases ADP from DnaK; ATP binding to DnaK triggers the release of the substrate protein, thus completing the reaction cycle. Several rounds of ATP-dependent interactions between DnaJ, DnaK and GrpE are required for fully efficient folding. The sequence is that of Protein GrpE from Chloroherpeton thalassium (strain ATCC 35110 / GB-78).